The sequence spans 37 residues: NAD-reducing hydrogenase HoxS subunit alpha (37 aa).

The protein belongs to the complex I 51 kDa subunit family. In terms of assembly, tetramer of an alpha and a gamma subunits (flavin-containing dimer), and a delta and a nickel-containing beta subunits (hydrogenase dimer). Requires FMN as cofactor. [4Fe-4S] cluster serves as cofactor.

It localises to the cytoplasm. The catalysed reaction is H2 + NAD(+) = NADH + H(+). Subunits alpha and gamma of HoxS constitute an NADH--oxidoreductase. The protein is NAD-reducing hydrogenase HoxS subunit alpha (hoxF) of Rhodococcus opacus (Nocardia opaca).